A 94-amino-acid polypeptide reads, in one-letter code: Integration host factor subunit beta (94 aa).

This sequence belongs to the bacterial histone-like protein family. Heterodimer of an alpha and a beta chain.

In terms of biological role, this protein is one of the two subunits of integration host factor, a specific DNA-binding protein that functions in genetic recombination as well as in transcriptional and translational control. This is Integration host factor subunit beta from Mesorhizobium japonicum (strain LMG 29417 / CECT 9101 / MAFF 303099) (Mesorhizobium loti (strain MAFF 303099)).